We begin with the raw amino-acid sequence, 981 residues long: Echinoderm microtubule-associated protein-like 4 (981 aa).

At M1 the chain carries N-acetylmethionine. Disordered regions lie at residues 1-20 and 57-205; these read MDGF…TSDV and DHVA…PKLI. Residues 1 to 249 form a microtubule-binding region; that stretch reads MDGFAGSLDD…IPSDVDNYDD (249 aa). A phosphoserine mark is found at S7, S13, S16, and S61. Residues 14–63 adopt a coiled-coil conformation; that stretch reads AASTSDVQDRLSALESRVQQQEDEITVLKAALADVLRRLAISEDHVASVK. A Phosphothreonine modification is found at T96. A compositionally biased stretch (basic and acidic residues) spans 114 to 134; the sequence is GTEKKKEKPQGQREKKEESHS. S134 carries the post-translational modification Phosphoserine; by NEK7. Residues 137-155 show a composition bias toward low complexity; that stretch reads QSPQIRASPSPQPSSQPLQ. S144 is modified (phosphoserine; by NEK6). A Phosphoserine; by NEK7 modification is found at S146. A Phosphoserine modification is found at S171. Over residues 176–193 the composition is skewed to basic and acidic residues; it reads SPAEKSHNSWENSDDSRN. S200 carries the post-translational modification Phosphoserine. T201 is modified (phosphothreonine). Y226 carries the post-translational modification Phosphotyrosine. T237 is subject to Phosphothreonine. WD repeat units follow at residues 259-297, 301-348, 356-396, 403-438, and 445-484; these read LKLE…LFNY, TQRH…VWDS, IIGL…VWDW, AEIK…FWTW, and RKQG…IWSK. T490 carries the phosphothreonine; by NEK6 modification. 8 WD repeats span residues 500-538, 543-579, 582-621, 625-662, 668-704, 711-750, 760-818, and 825-864; these read QISK…LWDH, EREI…LRGT, DGFQ…LWNS, RLEW…VLDA, VSIH…LYVV, YSRY…YWDI, RSDC…LFQY, and APSH…QWKL. T609 carries the post-translational modification Phosphothreonine; by NEK6 and NEK7. Over residues 881-893 the composition is skewed to polar residues; sequence LTKAPVSSTESVI. The tract at residues 881–981 is disordered; that stretch reads LTKAPVSSTE…EDQQDPSPSS (101 aa). S891 and S895 each carry phosphoserine. Phosphothreonine occurs at positions 897 and 899. S903 bears the Phosphoserine mark. Over residues 916–931 the composition is skewed to polar residues; that stretch reads ISSSPTLLENSLEQTV. Over residues 937–946 the composition is skewed to acidic residues; it reads HSEEESEEGS. Residue S978 is modified to Phosphoserine. At S981 the chain carries Phosphoserine; by NEK6 and NEK7.

Belongs to the WD repeat EMAP family. As to quaternary structure, homotrimer; self-association is mediated by the N-terminal coiled coil. Interacts (via WD repeats) with NUDC. Interacts with alpha- and beta-tubulin during mitosis. Phosphorylated during mitosis. Phosphorylation at Ser-144 and Ser-146 promotes its dissociation from microtubules during mitosis which is required for efficient chromosome congression.

It localises to the cytoplasm. It is found in the cytoskeleton. The protein resides in the spindle. The protein localises to the microtubule organizing center. Its subcellular location is the midbody. Essential for the formation and stability of microtubules (MTs). Required for the organization of the mitotic spindle and for the proper attachment of kinetochores to MTs. Promotes the recruitment of NUDC to the mitotic spindle for mitotic progression. This chain is Echinoderm microtubule-associated protein-like 4 (EML4), found in Homo sapiens (Human).